We begin with the raw amino-acid sequence, 581 residues long: MRHCDSFCELIPMKGCEAMLEWMIDQGAGREPADIVLKGGRFLDLITGELVESDIAICEDRIVGTFGTYRGKHEIDVSGRIVVPGFIDTHLHIESSQVTPHEFDRCVLPQGVTTAICDPHEIANVLGAEGIRFFLDSALETVMDIRVQLSSCVPATHMETSGVELLIDDLLPFADHPKVIGLAEFMNFPGVLAKDPECMAKLRAFQGRHIDGHAPLLRGLDLNGYIAAGIRTEHEATNAEEALEKLRKGMYVLVREGSVSKDLKALMPIITERHAQFLALCTDDRNPLDIADQGHLDYLIRTAIAGGVEPLAIYRAASVSAARAFGLFDRGLVAPGQRADLVVVDSLEGCHAEIVLSAGRVVSEALFAARKPVAEVGRNSVKAPRVTASNFRSQSNSGKTRAIGIVPGKIITQNLEFDLKVGPNGVEPDLERDVVKVAVIERHGKNGNIATGFVHGFGLKAGAIASTVSHDSHNICVVGASDEDIATAANRLGEIEGGFVVVRDGKVLAEMPLPIAGLMSTEPYETVREALRKLRHAAEDLGSVLEEPFLQLAFIALPVIPHLKITDRGLVDVDKFEFVGN.

This sequence belongs to the metallo-dependent hydrolases superfamily. Adenine deaminase family. Mn(2+) serves as cofactor.

It catalyses the reaction adenine + H2O + H(+) = hypoxanthine + NH4(+). In Brucella suis biovar 1 (strain 1330), this protein is Adenine deaminase.